Reading from the N-terminus, the 450-residue chain is Bifunctional protein GlmU (450 aa).

The segment at Met1–Arg229 is pyrophosphorylase. Residues Leu8 to Gly11, Lys22, Gln72, and Gly77 to Thr78 each bind UDP-N-acetyl-alpha-D-glucosamine. Asp102 lines the Mg(2+) pocket. Gly139, Glu154, and Asn227 together coordinate UDP-N-acetyl-alpha-D-glucosamine. Mg(2+) is bound at residue Asn227. The interval Val230–Asn250 is linker. Residues Gly251–Lys450 are N-acetyltransferase. Residues Arg332 and Lys350 each coordinate UDP-N-acetyl-alpha-D-glucosamine. The Proton acceptor role is filled by His362. The UDP-N-acetyl-alpha-D-glucosamine site is built by Tyr365 and Asn376. Acetyl-CoA is bound by residues Asn385–Tyr386, Ala422, and Arg439.

The protein in the N-terminal section; belongs to the N-acetylglucosamine-1-phosphate uridyltransferase family. In the C-terminal section; belongs to the transferase hexapeptide repeat family. In terms of assembly, homotrimer. Requires Mg(2+) as cofactor.

Its subcellular location is the cytoplasm. The catalysed reaction is alpha-D-glucosamine 1-phosphate + acetyl-CoA = N-acetyl-alpha-D-glucosamine 1-phosphate + CoA + H(+). The enzyme catalyses N-acetyl-alpha-D-glucosamine 1-phosphate + UTP + H(+) = UDP-N-acetyl-alpha-D-glucosamine + diphosphate. It functions in the pathway nucleotide-sugar biosynthesis; UDP-N-acetyl-alpha-D-glucosamine biosynthesis; N-acetyl-alpha-D-glucosamine 1-phosphate from alpha-D-glucosamine 6-phosphate (route II): step 2/2. The protein operates within nucleotide-sugar biosynthesis; UDP-N-acetyl-alpha-D-glucosamine biosynthesis; UDP-N-acetyl-alpha-D-glucosamine from N-acetyl-alpha-D-glucosamine 1-phosphate: step 1/1. It participates in bacterial outer membrane biogenesis; LPS lipid A biosynthesis. Its function is as follows. Catalyzes the last two sequential reactions in the de novo biosynthetic pathway for UDP-N-acetylglucosamine (UDP-GlcNAc). The C-terminal domain catalyzes the transfer of acetyl group from acetyl coenzyme A to glucosamine-1-phosphate (GlcN-1-P) to produce N-acetylglucosamine-1-phosphate (GlcNAc-1-P), which is converted into UDP-GlcNAc by the transfer of uridine 5-monophosphate (from uridine 5-triphosphate), a reaction catalyzed by the N-terminal domain. This Staphylococcus aureus (strain USA300) protein is Bifunctional protein GlmU.